We begin with the raw amino-acid sequence, 614 residues long: Kelch-like protein 40 (614 aa).

Residues 33–100 (IDCVLKIQGK…IYTSEIEITE (68 aa)) form the BTB domain. One can recognise a BACK domain in the interval 135 to 237 (CLAIFRLGLL…PQDYIKNKVE (103 aa)). 5 Kelch repeats span residues 353–405 (QLFV…ESDN), 406–455 (SIYL…SHDN), 456–503 (LVYV…VHKG), 505–550 (ILIA…SMNG), and 552–606 (LYAI…AARL).

The protein belongs to the KLHL40 family. As to quaternary structure, component of the BCR(KLHL40) E3 ubiquitin ligase complex.

Its subcellular location is the cytoplasm. The protein localises to the myofibril. It is found in the sarcomere. It localises to the a band. The protein resides in the i band. Substrate-specific adapter of a BCR (BTB-CUL3-RBX1) E3 ubiquitin ligase complex that acts as a key regulator of skeletal muscle development. This Xenopus tropicalis (Western clawed frog) protein is Kelch-like protein 40 (klhl40).